The primary structure comprises 324 residues: tRNA dimethylallyltransferase (324 aa).

Residue 17–24 (GPTASGKT) coordinates ATP. Substrate is bound at residue 19 to 24 (TASGKT). Interaction with substrate tRNA stretches follow at residues 42 to 45 (DSAL), 166 to 170 (QRIQR), and 251 to 256 (RCVGYR).

This sequence belongs to the IPP transferase family. Monomer. Mg(2+) is required as a cofactor.

The enzyme catalyses adenosine(37) in tRNA + dimethylallyl diphosphate = N(6)-dimethylallyladenosine(37) in tRNA + diphosphate. Its function is as follows. Catalyzes the transfer of a dimethylallyl group onto the adenine at position 37 in tRNAs that read codons beginning with uridine, leading to the formation of N6-(dimethylallyl)adenosine (i(6)A). The sequence is that of tRNA dimethylallyltransferase from Burkholderia pseudomallei (strain 1106a).